We begin with the raw amino-acid sequence, 93 residues long: MMDMARAHVFISGRVQGVNFRASARNYAREVGVSGWVRNLEDGRVEAVFEGERSAVQKMVSWCYSGPSHARVEAVDVRWEKPTGEERGFSIIW.

The region spanning 6–93 (RAHVFISGRV…GEERGFSIIW (88 aa)) is the Acylphosphatase-like domain. Active-site residues include Arg-21 and Asn-39.

It belongs to the acylphosphatase family.

It catalyses the reaction an acyl phosphate + H2O = a carboxylate + phosphate + H(+). The protein is Acylphosphatase (acyP) of Roseiflexus sp. (strain RS-1).